Reading from the N-terminus, the 219-residue chain is GTP-binding nuclear protein GSP1/CNR1 (219 aa).

The residue at position 2 (S2) is an N-acetylserine. S2 is subject to Phosphoserine. One can recognise a Small GTPase Ran-type domain in the interval E9 to N173. Residue D20 to T27 participates in GTP binding. Residues K39–V47 are switch-I. Residues G70, N124 to D127, and S152 to K154 contribute to the GTP site. Residues G70 to Q86 are switch-II.

It belongs to the small GTPase superfamily. Ran family. As to quaternary structure, found in a nuclear export complex with RanGTP, exportin and pre-miRNA. Forms a complex with YRB1. Interacts with BUD5, CEX1, RRP12, SRM1, and DIS3/RRP44.

It is found in the nucleus. GTP-binding protein involved in nucleocytoplasmic transport. Required for the import of protein into the nucleus and also for RNA export. Essential for cell viability. By analogy with Ras, Ran may be activated when GTP is exchanged for bound GDP by RCC1 and inactivated when GTP is hydrolyzed by Ran upon activation by RanGAP1. This Saccharomyces cerevisiae (strain ATCC 204508 / S288c) (Baker's yeast) protein is GTP-binding nuclear protein GSP1/CNR1 (GSP1).